We begin with the raw amino-acid sequence, 205 residues long: Basigin (205 aa).

The signal sequence occupies residues 1 to 18; sequence MAAALFVLLGFALLGTHG. The region spanning 19–103 is the Ig-like C2-type domain; the sequence is ASGAAGTVFT…MGTANIQLHG (85 aa). The Extracellular portion of the chain corresponds to 19–205; that stretch reads ASGAAGTVFT…AIITLRVRSH (187 aa). Disulfide bonds link C41–C87 and C126–C185. N44, N152, and N186 each carry an N-linked (GlcNAc...) asparagine glycan. Residues 105–199 form the Ig-like V-type domain; it reads PRVKAVKSSE…SKGSDQAIIT (95 aa).

As to quaternary structure, homooligomer. Interacts with VEGFA, KDR/VEGFR2, PPIA/CYPA, SLC16A12, SLC16A11, ATP1B2, MAG, L1CAM and AJAP1. Interacts with SLC16A1; interaction mediates SLC16A1 targeting to the plasma membrane. Interacts with SLC16A3; interaction mediates SLC16A3 targeting to the plasma membrane. Interacts with PPIL2; regulates BSG transport to the cell membrane. Interacts with XKR8; promoting its localization at the cell membrane. Interacts with SLC16A6; this interaction mediates targeting to the plasma membrane.

It localises to the cell membrane. Its subcellular location is the endoplasmic reticulum membrane. The protein localises to the basolateral cell membrane. Functionally, signaling receptor for cyclophilins, essential for PPIA/CYPA and PPIB/CYPB-dependent signaling related to chemotaxis and adhesion of immune cells. Plays an important role in targeting the monocarboxylate transporters SLC16A1/GLUT1, SLC16A3, SLC16A8, SLC16A11 and SLC16A12 to the plasma membrane. Acts as a coreceptor for vascular endothelial growth factor receptor 2 (KDR/VEGFR2) in endothelial cells enhancing its VEGFA-mediated activation and downstream signaling. Promotes angiogenesis through EPAS1/HIF2A-mediated up-regulation of VEGFA and KDR/VEGFR2 in endothelial cells. The chain is Basigin (BSG) from Bos taurus (Bovine).